Consider the following 343-residue polypeptide: MKALAKLERGPGLTLTRVKKPEVGHNDVLIKIRRTAICGTDIHIWKWDDWAQKTIPVPMHVGHEYVGEIVEMGQEVRGFSIGDRVSGEGHITCGFCRNCRAGRRHLCRNTVGVGVNREGAFAEYLAIPAFNAFKIPPEISDDLAAIFDPFGNATHTALSFNLVGEDVLITGAGPIGVMAVAIAKHVGARNVVITDINDYRLDLARRMGATRAVNVSRESLRDVMADLHMTEGFDVGLEMSGVPSAFTSLLESMNHGGKVALLGIPPAQTAIDWNQVIFKGLEIKGIYGREMFETWYKMVAMLQSGLDLSPIITHRFAVDDYEKGFAAMLSGESGKVILDWAAA.

Cys-38 is a binding site for Zn(2+). Residues Thr-40 and His-43 each act as charge relay system in the active site. The Zn(2+) site is built by His-63, Glu-64, Cys-93, Cys-96, Cys-99, and Cys-107. NAD(+) is bound by residues Ile-175, Asp-195, Arg-200, 262 to 264 (LGI), and 286 to 287 (IY).

This sequence belongs to the zinc-containing alcohol dehydrogenase family. Homotetramer. Requires Zn(2+) as cofactor.

The protein resides in the cytoplasm. The enzyme catalyses L-threonine + NAD(+) = (2S)-2-amino-3-oxobutanoate + NADH + H(+). Its pathway is amino-acid degradation; L-threonine degradation via oxydo-reductase pathway; glycine from L-threonine: step 1/2. Functionally, catalyzes the NAD(+)-dependent oxidation of L-threonine to 2-amino-3-ketobutyrate. This Burkholderia thailandensis (strain ATCC 700388 / DSM 13276 / CCUG 48851 / CIP 106301 / E264) protein is L-threonine 3-dehydrogenase.